The chain runs to 167 residues: Pathogenesis-related protein PRMS (167 aa).

Residues 1–27 (MEASNKLAVLLLWLVMAAATAVHPSYS) form the signal peptide. The region spanning 37–155 (PQNSARAAVG…NRGVFIICNY (119 aa)) is the SCP domain. 3 disulfides stabilise this stretch: Cys-71–Cys-143, Cys-116–Cys-122, and Cys-138–Cys-153.

It belongs to the CRISP family.

Its function is as follows. Probably involved in the defense reaction of plants against pathogens. The protein is Pathogenesis-related protein PRMS (PRMS) of Zea mays (Maize).